We begin with the raw amino-acid sequence, 278 residues long: HTH-type transcriptional activator RhaS (278 aa).

Positions 174 to 272 (NLLLAWLEDH…NWSPRDIRQG (99 aa)) constitute an HTH araC/xylS-type domain. 2 consecutive DNA-binding regions (H-T-H motif) follow at residues 191–212 (DAVADQFSLSLRTLHRQLKQQT) and 239–262 (VTDIAYRCGFSDSNHFSTLFRREF).

As to quaternary structure, binds DNA as a dimer.

The protein resides in the cytoplasm. Functionally, activates expression of the rhaBAD and rhaT operons. This Shigella sonnei (strain Ss046) protein is HTH-type transcriptional activator RhaS.